A 112-amino-acid polypeptide reads, in one-letter code: Nitrogen regulatory protein P-II (112 aa).

At Y51 the chain carries O-UMP-tyrosine.

The protein belongs to the P(II) protein family. In terms of assembly, homotrimer.

In nitrogen-limiting conditions, when the ratio of Gln to 2-ketoglutarate decreases, P-II is uridylylated to P-II-UMP. P-II-UMP allows the deadenylation of glutamine synthetase (GS), thus activating the enzyme. Conversely, in nitrogen excess P-II is deuridylated and promotes the adenylation of GS. P-II indirectly controls the transcription of the GS gene (glnA). P-II prevents NR-II-catalyzed conversion of NR-I to NR-I-phosphate, the transcriptional activator of glnA. When P-II is uridylylated to P-II-UMP, these events are reversed. The polypeptide is Nitrogen regulatory protein P-II (glnB) (Mesorhizobium japonicum (strain LMG 29417 / CECT 9101 / MAFF 303099) (Mesorhizobium loti (strain MAFF 303099))).